Reading from the N-terminus, the 397-residue chain is Phosphoglycerate kinase (397 aa).

Residues 21–23 (DFN), Arg37, 60–63 (HLGR), Arg119, and Arg152 contribute to the substrate site. Residues Lys203, Gly294, Glu325, and 354-357 (GGDS) contribute to the ATP site.

It belongs to the phosphoglycerate kinase family. In terms of assembly, monomer.

It localises to the cytoplasm. It catalyses the reaction (2R)-3-phosphoglycerate + ATP = (2R)-3-phospho-glyceroyl phosphate + ADP. The protein operates within carbohydrate degradation; glycolysis; pyruvate from D-glyceraldehyde 3-phosphate: step 2/5. In Chlorobium phaeovibrioides (strain DSM 265 / 1930) (Prosthecochloris vibrioformis (strain DSM 265)), this protein is Phosphoglycerate kinase.